A 244-amino-acid chain; its full sequence is Phosphoadenosine 5'-phosphosulfate reductase (244 aa).

The active-site Nucleophile; cysteine thiosulfonate intermediate is the cysteine 239.

The protein belongs to the PAPS reductase family. CysH subfamily.

It localises to the cytoplasm. The enzyme catalyses [thioredoxin]-disulfide + sulfite + adenosine 3',5'-bisphosphate + 2 H(+) = [thioredoxin]-dithiol + 3'-phosphoadenylyl sulfate. It functions in the pathway sulfur metabolism; hydrogen sulfide biosynthesis; sulfite from sulfate: step 3/3. Functionally, catalyzes the formation of sulfite from phosphoadenosine 5'-phosphosulfate (PAPS) using thioredoxin as an electron donor. This is Phosphoadenosine 5'-phosphosulfate reductase from Citrobacter koseri (strain ATCC BAA-895 / CDC 4225-83 / SGSC4696).